The chain runs to 411 residues: [Pyruvate dehydrogenase (acetyl-transferring)] kinase isozyme 4, mitochondrial (411 aa).

The Histidine kinase domain maps to 138 to 368 (IIEYKDACTV…DAIIYLKALS (231 aa)). ATP contacts are provided by residues 254 to 261 (ELFKNAMR), aspartate 293, 312 to 313 (ST), and 329 to 334 (GFGYGL).

This sequence belongs to the PDK/BCKDK protein kinase family. Homodimer. Interacts with the pyruvate dehydrogenase complex subunit DLAT, and is part of the multimeric pyruvate dehydrogenase complex that contains multiple copies of pyruvate dehydrogenase (E1), dihydrolipoamide acetyltransferase (DLAT, E2) and lipoamide dehydrogenase (DLD, E3). As to expression, ubiquitous; highest levels of expression in heart and skeletal muscle.

The protein localises to the mitochondrion matrix. The catalysed reaction is L-seryl-[pyruvate dehydrogenase E1 alpha subunit] + ATP = O-phospho-L-seryl-[pyruvate dehydrogenase E1 alpha subunit] + ADP + H(+). Kinase that plays a key role in regulation of glucose and fatty acid metabolism and homeostasis via phosphorylation of the pyruvate dehydrogenase subunits PDHA1 and PDHA2. This inhibits pyruvate dehydrogenase activity, and thereby regulates metabolite flux through the tricarboxylic acid cycle, down-regulates aerobic respiration and inhibits the formation of acetyl-coenzyme A from pyruvate. Inhibition of pyruvate dehydrogenase decreases glucose utilization and increases fat metabolism in response to prolonged fasting and starvation. Plays an important role in maintaining normal blood glucose levels under starvation, and is involved in the insulin signaling cascade. Via its regulation of pyruvate dehydrogenase activity, plays an important role in maintaining normal blood pH and in preventing the accumulation of ketone bodies under starvation. In the fed state, mediates cellular responses to glucose levels and to a high-fat diet. Regulates both fatty acid oxidation and de novo fatty acid biosynthesis. Plays a role in the generation of reactive oxygen species. Protects detached epithelial cells against anoikis. Plays a role in cell proliferation via its role in regulating carbohydrate and fatty acid metabolism. The polypeptide is [Pyruvate dehydrogenase (acetyl-transferring)] kinase isozyme 4, mitochondrial (PDK4) (Homo sapiens (Human)).